A 359-amino-acid polypeptide reads, in one-letter code: Isopentenyl-diphosphate delta-isomerase (359 aa).

Position 11 to 12 (11 to 12 (RK)) interacts with substrate. FMN-binding positions include Ser68, 69–71 (GMT), Ser99, and Asn127. Substrate is bound at residue 99-101 (SQR). Residue Gln163 participates in substrate binding. Residue Glu164 participates in Mg(2+) binding. FMN-binding positions include Lys199, Thr229, 278 to 280 (GIR), and 299 to 300 (AL).

It belongs to the IPP isomerase type 2 family. Homooctamer. Dimer of tetramers. FMN is required as a cofactor. Requires NADPH as cofactor. Mg(2+) serves as cofactor.

The protein localises to the cytoplasm. The catalysed reaction is isopentenyl diphosphate = dimethylallyl diphosphate. Its activity is regulated as follows. Inhibited by 3,4-epoxy-3-methylbutyl diphosphate (EIPP). Functionally, involved in the biosynthesis of isoprenoids. Catalyzes the 1,3-allylic rearrangement of the homoallylic substrate isopentenyl (IPP) to its allylic isomer, dimethylallyl diphosphate (DMAPP). The polypeptide is Isopentenyl-diphosphate delta-isomerase (Methanocaldococcus jannaschii (strain ATCC 43067 / DSM 2661 / JAL-1 / JCM 10045 / NBRC 100440) (Methanococcus jannaschii)).